The sequence spans 363 residues: N-acetylmuramate/N-acetylglucosamine kinase (363 aa).

This sequence belongs to the kinase AmgK family.

The enzyme catalyses N-acetyl-D-muramate + ATP = N-acetyl-alpha-D-muramate 1-phosphate + ADP + H(+). It carries out the reaction N-acetyl-D-glucosamine + ATP = N-acetyl-alpha-D-glucosamine 1-phosphate + ADP + H(+). Its pathway is cell wall biogenesis; peptidoglycan recycling. Its function is as follows. Sugar kinase that catalyzes the ATP-dependent phosphorylation of N-acetylmuramate (MurNAc) and N-acetylglucosamine (GlcNAc) at its C1 hydroxyl group, leading to MurNAc alpha-1P and GlcNAc alpha-1P, respectively. Is likely involved in peptidoglycan recycling as part of a cell wall recycling pathway that bypasses de novo biosynthesis of the peptidoglycan precursor UDP-MurNAc. Is able to complement the fosfomycin sensitivity phenotype of a P.putida mutant lacking amgK. The sequence is that of N-acetylmuramate/N-acetylglucosamine kinase from Caulobacter vibrioides (strain ATCC 19089 / CIP 103742 / CB 15) (Caulobacter crescentus).